Reading from the N-terminus, the 136-residue chain is Large ribosomal subunit protein uL16 (136 aa).

Belongs to the universal ribosomal protein uL16 family. As to quaternary structure, part of the 50S ribosomal subunit.

Binds 23S rRNA and is also seen to make contacts with the A and possibly P site tRNAs. This chain is Large ribosomal subunit protein uL16, found in Shewanella pealeana (strain ATCC 700345 / ANG-SQ1).